Reading from the N-terminus, the 689-residue chain is Chloride channel protein ClC-Kb (689 aa).

Topologically, residues 1 to 51 (MSRVLVIEQREGEEKTLIQKHIFRPFPNTRRVVIDHLQRLKNFLFRIGDDW) are cytoplasmic. A run of 2 helical transmembrane segments spans residues 52–83 (YFLFALGVIMALISFTMDFTVSKMLNAHRWLQ) and 92–112 (LRYLSWIVYPIALVAFSTGFA). The helical intramembrane region spans 117 to 128 (PHSGGSGIPELK). Ser122 contacts chloride. Helical transmembrane passes span 142 to 161 (IKNFGAKVVGLTCTLSAGST) and 162 to 181 (MFLGKVGPFVHLSSMIAAYL). The N-linked (GlcNAc...) asparagine glycan is linked to Asn194. The helical intramembrane region spans 204–225 (AAAAVGVSTVFGAPISGVLFSV). Residues 237-256 (YWRGFFAATCGAFVFRLLAV) traverse the membrane as a helical segment. Residues Glu260, Glu262, Asp279, and Glu282 each coordinate Ca(2+). The next 2 helical transmembrane spans lie at 283–311 (MFFFAILGVVCGLIGCAYLFCQRWLLGYV) and 326–343 (PMYSALVALLISSITFPE). An intramembrane region (helical) is located at residues 350-361 (ASRLTMKELLTS). Transmembrane regions (helical) follow at residues 402–422 (GTLAFFIIMKFWMFILATTLP) and 423–442 (MPAGYFMPVFVFGAAIGRLV). Chloride is bound at residue Phe428. The segment at residues 466 to 498 (GGYAWQGAPAYSGAVTHSVSTALLAFEATGQIA) is an intramembrane region (helical). A helical transmembrane segment spans residues 502–522 (PVILCVLIANAFTQKLQPSFY). Residues 523–689 (DGTIIVKKLP…KAIEDLANPK (167 aa)) lie on the Cytoplasmic side of the membrane. CBS domains are found at residues 553 to 613 (MNPD…SHER) and 630 to 689 (ACSI…ANPK).

This sequence belongs to the chloride channel (TC 2.A.49) family. N-glycosylated on a single asparagine, probably Asn-365 or Asn-375. In terms of tissue distribution, expressed in two distinct regions of the kidney; the proximal convoluted tubule and the diluting segment.

Its subcellular location is the cell membrane. Functionally, voltage-gated chloride channel. Chloride channels have several functions including the regulation of cell volume, the stabilization of membrane potential, signal transduction and transepithelial transport. This Xenopus laevis (African clawed frog) protein is Chloride channel protein ClC-Kb (clcnkb).